Reading from the N-terminus, the 50-residue chain is Major pollen allergen Ole e 6 (50 aa).

Intrachain disulfides connect Cys8-Cys34, Cys12-Cys30, and Cys16-Cys26.

As to expression, expressed in pollen.

The protein is Major pollen allergen Ole e 6 (OLE6) of Olea europaea (Common olive).